The sequence spans 79 residues: UPF0291 protein lp_2062 (79 aa).

The protein belongs to the UPF0291 family.

Its subcellular location is the cytoplasm. This is UPF0291 protein lp_2062 from Lactiplantibacillus plantarum (strain ATCC BAA-793 / NCIMB 8826 / WCFS1) (Lactobacillus plantarum).